The primary structure comprises 136 residues: Thiosulfate sulfurtransferase 18 (136 aa).

The region spanning 26-128 (LQSGHQYLDV…WVDHSFPINT (103 aa)) is the Rhodanese domain. The active-site Cysteine persulfide intermediate is the Cys88.

The protein resides in the cytoplasm. It catalyses the reaction thiosulfate + hydrogen cyanide = thiocyanate + sulfite + 2 H(+). Catalyzes the transfer of a sulfur ion from a donor to cyanide or to other thiol compounds. Substrate preference is thiosulfate &gt; 3-mercaptopyruvate. In Arabidopsis thaliana (Mouse-ear cress), this protein is Thiosulfate sulfurtransferase 18 (STR18).